The chain runs to 959 residues: Glycine dehydrogenase (decarboxylating) (959 aa).

N6-(pyridoxal phosphate)lysine is present on Lys-708.

The protein belongs to the GcvP family. As to quaternary structure, the glycine cleavage system is composed of four proteins: P, T, L and H. The cofactor is pyridoxal 5'-phosphate.

The enzyme catalyses N(6)-[(R)-lipoyl]-L-lysyl-[glycine-cleavage complex H protein] + glycine + H(+) = N(6)-[(R)-S(8)-aminomethyldihydrolipoyl]-L-lysyl-[glycine-cleavage complex H protein] + CO2. The glycine cleavage system catalyzes the degradation of glycine. The P protein binds the alpha-amino group of glycine through its pyridoxal phosphate cofactor; CO(2) is released and the remaining methylamine moiety is then transferred to the lipoamide cofactor of the H protein. This chain is Glycine dehydrogenase (decarboxylating), found in Yersinia pseudotuberculosis serotype O:1b (strain IP 31758).